The following is a 513-amino-acid chain: Laccase (513 aa).

Plastocyanin-like domains lie at 45–81, 101–178, 240–318, and 378–509; these read PTRL…STHF, KTVV…HDPK, WPYL…ILAN, and QDEY…MDIT. 4 residues coordinate Cu cation: His-105, His-107, His-153, and His-155. Residues His-419, His-422, His-424, His-491, Cys-492, His-493, His-497, and Met-502 each contribute to the Cu cation site.

This sequence belongs to the multicopper oxidase family. As to quaternary structure, monomer. Requires Cu(2+) as cofactor.

Its subcellular location is the spore coat. The catalysed reaction is 4 hydroquinone + O2 = 4 benzosemiquinone + 2 H2O. It carries out the reaction 2 (4Z,15Z)-bilirubin IXalpha + O2 = 2 biliverdin IXalpha + 2 H2O. With respect to regulation, inhibited by azide. In terms of biological role, multicopper oxidase that catalyzes the oxidation of a variety of substrates, including phenolic and non-phenolic compounds. Substrates include syringaldazine (SGZ), 2,6-dimethoxyphenol (2,6-DMP) and the non-phenolic compound 2,2'-azino-bis(3-ethylbenzothiazoline-6-sulfonic acid) (ABTS). Has no tyrosinase activity. Is implicated in the biosynthesis of a brownish pigment that characterizes sporulating colonies of B.subtilis, and which appears to be a melanin-like product and to confer protection against UV light. Functionally, in vitro, also shows strong bilirubin oxidase (BOD) activity, and can catalyze the oxidation of free bilirubin (UB), direct bilirubin (conjugated with glucuronic acid, DB) and ditaurobilirubin. In Bacillus subtilis (strain 168), this protein is Laccase.